Here is a 364-residue protein sequence, read N- to C-terminus: Dihydroorotate dehydrogenase (quinone) (364 aa).

FMN is bound by residues 61-65 (AGFDK) and Thr85. Lys65 contacts substrate. 110 to 114 (NRMGF) lines the substrate pocket. 2 residues coordinate FMN: Asn139 and Asn170. Asn170 contributes to the substrate binding site. The active-site Nucleophile is the Ser173. Asn175 serves as a coordination point for substrate. 2 residues coordinate FMN: Lys214 and Ala242. 243-244 (NT) is a binding site for substrate. FMN-binding positions include Gly266, Gly295, and 316 to 317 (YS).

Belongs to the dihydroorotate dehydrogenase family. Type 2 subfamily. In terms of assembly, monomer. Requires FMN as cofactor.

The protein resides in the cell membrane. The enzyme catalyses (S)-dihydroorotate + a quinone = orotate + a quinol. The protein operates within pyrimidine metabolism; UMP biosynthesis via de novo pathway; orotate from (S)-dihydroorotate (quinone route): step 1/1. Its function is as follows. Catalyzes the conversion of dihydroorotate to orotate with quinone as electron acceptor. The polypeptide is Dihydroorotate dehydrogenase (quinone) (Rhodopseudomonas palustris (strain TIE-1)).